A 240-amino-acid chain; its full sequence is Biosynthetic peptidoglycan transglycosylase (240 aa).

The helical transmembrane segment at 27–47 (VVLLFFFAVFALLLIFRFVPI) threads the bilayer.

The protein belongs to the glycosyltransferase 51 family.

Its subcellular location is the cell inner membrane. It catalyses the reaction [GlcNAc-(1-&gt;4)-Mur2Ac(oyl-L-Ala-gamma-D-Glu-L-Lys-D-Ala-D-Ala)](n)-di-trans,octa-cis-undecaprenyl diphosphate + beta-D-GlcNAc-(1-&gt;4)-Mur2Ac(oyl-L-Ala-gamma-D-Glu-L-Lys-D-Ala-D-Ala)-di-trans,octa-cis-undecaprenyl diphosphate = [GlcNAc-(1-&gt;4)-Mur2Ac(oyl-L-Ala-gamma-D-Glu-L-Lys-D-Ala-D-Ala)](n+1)-di-trans,octa-cis-undecaprenyl diphosphate + di-trans,octa-cis-undecaprenyl diphosphate + H(+). Its pathway is cell wall biogenesis; peptidoglycan biosynthesis. Its function is as follows. Peptidoglycan polymerase that catalyzes glycan chain elongation from lipid-linked precursors. The chain is Biosynthetic peptidoglycan transglycosylase from Haemophilus influenzae (strain PittEE).